The chain runs to 487 residues: ESCRT-I complex subunit vps23 (487 aa).

One can recognise an SB domain in the interval 428-487; the sequence is SERELKYYELKRKDEKLDEGIRALNQALHHESIMPASWLKGIKLLARQQFLIRDEMLQYS.

Component of the ESCRT-I complex (endosomal sorting complex required for transport I).

It is found in the cytoplasm. The protein localises to the endosome. It localises to the late endosome membrane. Its function is as follows. Component of the ESCRT-I complex, a regulator of vesicular trafficking process. Binds to ubiquitinated cargo proteins and is required for the sorting of endocytic ubiquitinated cargos into multivesicular bodies (MVBs). Mediates the association to the ESCRT-0 complex. In Schizosaccharomyces pombe (strain 972 / ATCC 24843) (Fission yeast), this protein is ESCRT-I complex subunit vps23 (sst6).